Reading from the N-terminus, the 512-residue chain is uncharacterized protein (512 aa).

12 consecutive transmembrane segments (helical) span residues glycine 25 to alanine 45, leucine 55 to leucine 75, leucine 96 to alanine 116, valine 123 to valine 143, leucine 148 to valine 168, leucine 183 to proline 203, methionine 238 to alanine 258, glycine 263 to tryptophan 283, glycine 294 to glutamate 314, phenylalanine 329 to valine 349, leucine 359 to glycine 379, and alanine 386 to leucine 406. The tract at residues tyrosine 428–alanine 512 is disordered.

It is found in the cell membrane. This is an uncharacterized protein from Mycobacterium tuberculosis (strain CDC 1551 / Oshkosh).